A 357-amino-acid polypeptide reads, in one-letter code: Acyl-coenzyme A diphosphatase NUDT19 (357 aa).

Positions Ala-10 to Glu-242 constitute a Nudix hydrolase domain. The interval Pro-72–Asp-93 is disordered. Positions Pro-78–Pro-87 are enriched in pro residues. A Nudix box motif is present at residues Ala-97–Gly-118. 2 residues coordinate Mg(2+): Glu-112 and Glu-116. Lys-300 carries the N6-succinyllysine modification. A Microbody targeting signal motif is present at residues Ala-355–Leu-357.

It belongs to the Nudix hydrolase family. Monomer. Requires Mg(2+) as cofactor. The cofactor is Mn(2+). As to expression, highly expressed in the kidneys, with lower levels in skeletal muscle and brain (at protein level).

The protein resides in the peroxisome. It carries out the reaction an acyl-CoA + H2O = an acyl-4'-phosphopantetheine + adenosine 3',5'-bisphosphate + 2 H(+). It catalyses the reaction CoA + H2O = (R)-4'-phosphopantetheine + adenosine 3',5'-bisphosphate + 2 H(+). The enzyme catalyses hexanoyl-CoA + H2O = hexanoyl-4'-phosphopantetheine + adenosine 3',5'-bisphosphate + 2 H(+). The catalysed reaction is octanoyl-CoA + H2O = S-octanoyl-4'-phosphopantetheine + adenosine 3',5'-bisphosphate + 2 H(+). It carries out the reaction butanoyl-CoA + H2O = S-butanoyl-4'-phosphopantetheine + adenosine 3',5'-bisphosphate + 2 H(+). It catalyses the reaction propanoyl-CoA + H2O = propanoyl-4'-phosphopantetheine + adenosine 3',5'-bisphosphate + 2 H(+). The enzyme catalyses malonyl-CoA + H2O = malonyl-4'-phosphopantetheine + adenosine 3',5'-bisphosphate + 2 H(+). The catalysed reaction is succinyl-CoA + H2O = succinyl-4'-phosphopantetheine + adenosine 3',5'-bisphosphate + 2 H(+). It carries out the reaction choloyl-CoA + H2O = S-choloyl-4'-phosphopantetheine + adenosine 3',5'-bisphosphate + 2 H(+). It catalyses the reaction 4,8-dimethylnonanoyl-CoA + H2O = S-(4,8-dimethylnonanoyl)-4'-phosphopantetheine + adenosine 3',5'-bisphosphate + 2 H(+). The enzyme catalyses (9Z,12Z,15Z)-octadecatrienoyl-CoA + H2O = S-(9Z,12Z,15Z-octadecatrienoyl)-4'-phosphopantetheine + adenosine 3',5'-bisphosphate + 2 H(+). The catalysed reaction is (9Z,12Z)-octadecadienoyl-CoA + H2O = S-(9Z,12Z-octadecadienoyl)-4'-phosphopantetheine + adenosine 3',5'-bisphosphate + 2 H(+). It carries out the reaction (9Z)-hexadecenoyl-CoA + H2O = S-(9Z-hexadecenoyl)-4'-phosphopantetheine + adenosine 3',5'-bisphosphate + 2 H(+). It catalyses the reaction (9Z)-tetradecenoyl-CoA + H2O = S-(9Z-tetradecenoyl)-4'-phosphopantetheine + adenosine 3',5'-bisphosphate + 2 H(+). The enzyme catalyses (6Z)-octenoyl-CoA + H2O = S-(6Z-octenoyl)-4'-phosphopantetheine + adenosine 3',5'-bisphosphate + 2 H(+). The catalysed reaction is hexadecanoyl-CoA + H2O = S-hexadecanoyl-4'-phosphopantetheine + adenosine 3',5'-bisphosphate + 2 H(+). It carries out the reaction tetradecanoyl-CoA + H2O = tetradecanoyl-4'-phosphopantetheine + adenosine 3',5'-bisphosphate + 2 H(+). It catalyses the reaction dodecanoyl-CoA + H2O = S-dodecanoyl-4'-phosphopantetheine + adenosine 3',5'-bisphosphate + 2 H(+). The enzyme catalyses a 5'-end CoA-ribonucleoside in mRNA + H2O = a 5'-end phospho-adenosine-phospho-ribonucleoside in mRNA + (R)-4'-phosphopantetheine + 2 H(+). Inhibited by chenodeoxycholic acid (CDCA) and its conjugated derivatives, taurochenodeoxycholic acid and glycochenodeoxycholic acid. Inhibited by fluoride. Functionally, fatty acyl-coenzyme A (CoA) diphosphatase that hydrolyzes fatty acyl-CoA to yield acyl-4'-phosphopantetheine and adenosine 3',5'-bisphosphate. Mediates the hydrolysis of a wide range of CoA esters, including choloyl-CoA and branched-chain fatty-acyl-CoA esters and at low substrate concentrations medium and long-chain fatty-acyl-CoA esters are the primary substrates. Highest activity seen with medium-chain acyl-CoA esters and higher rates of activity seen with the unsaturated acyl-CoA esters compared with the saturated esters. Exhibits decapping activity towards dpCoA-capped RNAs in vitro. This chain is Acyl-coenzyme A diphosphatase NUDT19 (Nudt19), found in Mus musculus (Mouse).